The primary structure comprises 161 residues: Allophycocyanin alpha chain (161 aa).

Position 71 is an N4-methylasparagine (N71). (2R,3E)-phycocyanobilin is bound at residue C81.

The protein belongs to the phycobiliprotein family. Heterodimer of an alpha and a beta chain. Post-translationally, contains one covalently linked phycocyanobilin chromophore.

The protein localises to the plastid. Its subcellular location is the chloroplast thylakoid membrane. Light-harvesting photosynthetic bile pigment-protein from the phycobiliprotein complex. Allophycocyanin has a maximum absorption at approximately 650 nanometers. In Galdieria sulphuraria (Red alga), this protein is Allophycocyanin alpha chain (apcA).